The chain runs to 1206 residues: DNA polymerase beta (1206 aa).

Tandem repeats lie at residues 1071–1074 (AGNP), 1075–1078 (AGNP), 1079–1082 (AGNP), and 1083–1086 (AGNA). The tract at residues 1071-1086 (AGNPAGNPAGNPAGNA) is 4 X 4 AA tandem repeats of A-G-[NK]-[PA].

It belongs to the DNA polymerase type-B family.

It catalyses the reaction DNA(n) + a 2'-deoxyribonucleoside 5'-triphosphate = DNA(n+1) + diphosphate. Its function is as follows. DNA-directed DNA polymerase involved in viral DNA replication. This is DNA polymerase beta from Ornithodoros (relapsing fever ticks).